Consider the following 295-residue polypeptide: Probable porphobilinogen deaminase (295 aa).

An S-(dipyrrolylmethanemethyl)cysteine modification is found at Cys-234.

It belongs to the HMBS family. The cofactor is dipyrromethane.

It catalyses the reaction 4 porphobilinogen + H2O = hydroxymethylbilane + 4 NH4(+). The protein operates within porphyrin-containing compound metabolism; protoporphyrin-IX biosynthesis; coproporphyrinogen-III from 5-aminolevulinate: step 2/4. In terms of biological role, tetrapolymerization of the monopyrrole PBG into the hydroxymethylbilane pre-uroporphyrinogen in several discrete steps. The sequence is that of Probable porphobilinogen deaminase (hemC) from Thermoplasma acidophilum (strain ATCC 25905 / DSM 1728 / JCM 9062 / NBRC 15155 / AMRC-C165).